Consider the following 259-residue polypeptide: Glandular kallikrein-10 (259 aa).

The N-terminal stretch at M1 to A18 is a signal peptide. Positions P19–R24 are cleaved as a propeptide — activation peptide. The Peptidase S1 domain occupies I25–K256. Intrachain disulfides connect C31-C171, C48-C64, C150-C217, C182-C196, and C207-C232. The active-site Charge relay system is H63. 2 N-linked (GlcNAc...) asparagine glycosylation sites follow: N91 and N106. D118 functions as the Charge relay system in the catalytic mechanism. S211 serves as the catalytic Charge relay system.

This sequence belongs to the peptidase S1 family. Kallikrein subfamily. In terms of assembly, heterodimer of a light chain and heavy chain linked by a disulfide bond. Post-translationally, probably N- and O-glycosylated. As to expression, kidney and submandibular gland, where it is found in the granular convoluted tubule and striated duct cells. It is likely that the enzyme is mainly synthesized in the granular convoluted tubules and then transferred to other tissues by release into the vasculature or interstitial space.

The catalysed reaction is Preferential cleavage of Arg-|-Xaa bonds in small molecule substrates. Highly selective action to release kallidin (lysyl-bradykinin) from kininogen involves hydrolysis of Met-|-Xaa or Leu-|-Xaa.. In terms of biological role, glandular kallikreins cleave Met-Lys and Arg-Ser bonds in kininogen to release Lys-bradykinin. This protein may be involved in the regulation of renal function. This Rattus norvegicus (Rat) protein is Glandular kallikrein-10 (Klk10).